The following is a 249-amino-acid chain: Ribonuclease PH (249 aa).

Phosphate-binding positions include arginine 86 and 124 to 126 (GTR).

Belongs to the RNase PH family. In terms of assembly, homohexameric ring arranged as a trimer of dimers.

The enzyme catalyses tRNA(n+1) + phosphate = tRNA(n) + a ribonucleoside 5'-diphosphate. Functionally, phosphorolytic 3'-5' exoribonuclease that plays an important role in tRNA 3'-end maturation. Removes nucleotide residues following the 3'-CCA terminus of tRNAs; can also add nucleotides to the ends of RNA molecules by using nucleoside diphosphates as substrates, but this may not be physiologically important. Probably plays a role in initiation of 16S rRNA degradation (leading to ribosome degradation) during starvation. The polypeptide is Ribonuclease PH (Clostridium botulinum (strain Eklund 17B / Type B)).